A 143-amino-acid chain; its full sequence is Transcriptional regulator MraZ (143 aa).

SpoVT-AbrB domains lie at 5–47 (EYQH…PKDE) and 76–119 (AIES…SKDN).

It belongs to the MraZ family. In terms of assembly, forms oligomers.

It localises to the cytoplasm. Its subcellular location is the nucleoid. This chain is Transcriptional regulator MraZ, found in Oenococcus oeni (strain ATCC BAA-331 / PSU-1).